A 134-amino-acid polypeptide reads, in one-letter code: Probable RNA-binding protein MJ0652 (134 aa).

The 98-residue stretch at arginine 11–lysine 108 folds into the CRM domain.

This chain is Probable RNA-binding protein MJ0652, found in Methanocaldococcus jannaschii (strain ATCC 43067 / DSM 2661 / JAL-1 / JCM 10045 / NBRC 100440) (Methanococcus jannaschii).